Consider the following 338-residue polypeptide: Uroporphyrinogen decarboxylase (338 aa).

Substrate is bound by residues 27–31 (RQAGR), Asp-77, Tyr-151, Ser-203, and His-317.

Belongs to the uroporphyrinogen decarboxylase family. Homodimer.

Its subcellular location is the cytoplasm. It carries out the reaction uroporphyrinogen III + 4 H(+) = coproporphyrinogen III + 4 CO2. It participates in porphyrin-containing compound metabolism; protoporphyrin-IX biosynthesis; coproporphyrinogen-III from 5-aminolevulinate: step 4/4. Catalyzes the decarboxylation of four acetate groups of uroporphyrinogen-III to yield coproporphyrinogen-III. The protein is Uroporphyrinogen decarboxylase of Wolbachia pipientis wMel.